Here is a 292-residue protein sequence, read N- to C-terminus: MASTKPASSLIYQAWNKLSINQTIPSDSLELLGERLAIAFAPKLKEQRRNGRRRNLEYVAQHRRKIARKIYLEILEKDPNIFLPFILAVSPRACLSFDISSFLEQHQSQGRHFLRNNAEAILWGLAKKHDIDGSLHFRKLMREIFQLSPPATEAEGKEHYSLHLSTLPAIRNAFGDVIFDAIERSPTQVTARAKGYFSEKTESVWTKVPYRSSQDAIISLEVGSAIELANVLFPIATQKIVSILSACSPTVRQKNFSEAILGPDPQDTPATSSEIGMKFKVHMTAVANSTLC.

A Bipartite nuclear localization signal motif is present at residues 48-70; sequence RRNGRRRNLEYVAQHRRKIARKI. Positions 156–186 are RNA recognition motif (RRM)-like domain; sequence GKEHYSLHLSTLPAIRNAFGDVIFDAIERSP.

It belongs to the hrmA family.

It is found in the nucleus. Functionally, hypoxia responsive morphology factor that modulates the expression of the subtelomeric hrmA-associated cluster (HAC) containing genes that alter the hyphal surface (such as reduced total chitin or increased beta-glucan exposure) and perturb inter-hyphal interactions within the developing biofilms, resulting in a loss of vertically aligned polarized growing filaments. Consequently, this hypoxia-typic morphotype (called H-MORPH) with altered biofilm architecture leads to increased hypoxia fitness, increased host inflammation, rapid disease progression, and mortality in a murine model of invasive aspergillosis. The protein is Hypoxia responsive morphology factor A of Aspergillus fumigatus (strain CBS 144.89 / FGSC A1163 / CEA10) (Neosartorya fumigata).